A 44-amino-acid polypeptide reads, in one-letter code: Relaxin (44 aa).

A Pyrrolidone carboxylic acid modification is found at Gln1. 3 disulfides stabilise this stretch: Cys3–Cys31, Cys15–Cys44, and Cys30–Cys35.

This sequence belongs to the insulin family. As to quaternary structure, heterodimer of a B chain and an A chain linked by two disulfide bonds.

The protein resides in the secreted. The sequence is that of Relaxin from Carcharias taurus (Sand tiger shark).